The sequence spans 104 residues: Large ribosomal subunit protein uL24 (104 aa).

Belongs to the universal ribosomal protein uL24 family. Part of the 50S ribosomal subunit.

One of two assembly initiator proteins, it binds directly to the 5'-end of the 23S rRNA, where it nucleates assembly of the 50S subunit. Functionally, one of the proteins that surrounds the polypeptide exit tunnel on the outside of the subunit. The sequence is that of Large ribosomal subunit protein uL24 from Neorickettsia sennetsu (strain ATCC VR-367 / Miyayama) (Ehrlichia sennetsu).